The following is an 89-amino-acid chain: Small ribosomal subunit protein uS19 (89 aa).

The protein belongs to the universal ribosomal protein uS19 family.

Functionally, protein S19 forms a complex with S13 that binds strongly to the 16S ribosomal RNA. This is Small ribosomal subunit protein uS19 from Xylella fastidiosa (strain 9a5c).